The sequence spans 286 residues: General stress protein 39 (286 aa).

Positions 1-26 (MANYPKELPAQTQSRQPGIESEMNPS) are disordered. 46-70 (LITGGDSGIGRAVSVAYAKEGADIA) contributes to the NAD(+) binding site. Substrate is bound at residue Ser-178. Catalysis depends on Tyr-191, which acts as the Proton acceptor.

This sequence belongs to the short-chain dehydrogenases/reductases (SDR) family.

The protein is General stress protein 39 (ydaD) of Bacillus subtilis (strain 168).